The following is a 56-amino-acid chain: MSKGTSSMGKRQKRTHAKCRRCGSVSFNVHTKQCTSCGFGKTSRMRTYKWQAKCKY.

Zn(2+)-binding residues include Cys19, Cys22, Cys34, and Cys37. The C4-type zinc-finger motif lies at 19–37 (CRRCGSVSFNVHTKQCTSC).

The protein belongs to the eukaryotic ribosomal protein eL37 family. Zn(2+) is required as a cofactor.

Binds to the 23S rRNA. The polypeptide is Large ribosomal subunit protein eL37 (rpl37e) (Methanosarcina acetivorans (strain ATCC 35395 / DSM 2834 / JCM 12185 / C2A)).